The primary structure comprises 154 residues: MEINWSWQRFNDISGEAMHEMLALRQEVFVVEQGCLYLDADGLDKQSWHLFGRTNDQQLVAYARLNFPNTRYPEPSFGRVLTSKAIRGMGAGRKIVAACIQKSLREYPNLDLQISAQAHLTEFYAEFGFTKVGDPYDDHGIEHISMIFRVPPNG.

Positions 8-151 constitute an N-acetyltransferase domain; it reads QRFNDISGEA…EHISMIFRVP (144 aa).

The protein belongs to the UPF0039 (ElaA) family.

The protein is UPF0039 protein sll0451 of Synechocystis sp. (strain ATCC 27184 / PCC 6803 / Kazusa).